A 138-amino-acid polypeptide reads, in one-letter code: Putative pre-16S rRNA nuclease (138 aa).

Belongs to the YqgF nuclease family.

Its subcellular location is the cytoplasm. Its function is as follows. Could be a nuclease involved in processing of the 5'-end of pre-16S rRNA. This Listeria monocytogenes serotype 4b (strain CLIP80459) protein is Putative pre-16S rRNA nuclease.